The sequence spans 87 residues: Small cysteine-rich outer membrane protein omcA (87 aa).

Residues 1 to 19 (MKKAVLLATVFCGVVGLTS) form the signal peptide. Cys-20 is lipidated: N-palmitoyl cysteine. Cys-20 is lipidated: S-diacylglycerol cysteine.

As to quaternary structure, part of a disulfide cross-linked outer membrane complex (COMC) composed of the major outer membrane porin (MOMP), the small cysteine-rich protein (omcA) and the large cysteine-rich periplasmic protein (omcB). In terms of processing, N-terminal amide-linked and S-diacylglycerol cysteine-linked to 16:0, 18:0, 15:0 branched, and 17:0 branched fatty acids (ratio 6:5:3:4) in the EB stage. The exact distribution of fatty acids has not been determined. Post-translationally, the N-terminus is blocked.

Its subcellular location is the cell outer membrane. In elementary bodies (EBs, the infectious stage, which is able to survive outside the host cell) provides the structural integrity of the outer envelope through disulfide cross-links with the large cysteine-rich periplasmic protein and the major outer membrane porin. It has been described in publications as the Sarkosyl-insoluble COMC (Chlamydia outer membrane complex), and serves as the functional equivalent of peptidoglycan. This is Small cysteine-rich outer membrane protein omcA (omcA) from Chlamydia psittaci (Chlamydophila psittaci).